The primary structure comprises 689 residues: DNA ligase (689 aa).

Residues 40–44 (DAEYD), 89–90 (SL), and Glu-121 contribute to the NAD(+) site. Lys-123 serves as the catalytic N6-AMP-lysine intermediate. NAD(+) is bound by residues Arg-144, Glu-179, Lys-295, and Lys-319. The Zn(2+) site is built by Cys-413, Cys-416, Cys-431, and Cys-437. Residues 610-689 (REQSSLTGKI…AEWLTLVRDI (80 aa)) form the BRCT domain.

It belongs to the NAD-dependent DNA ligase family. LigA subfamily. The cofactor is Mg(2+). Mn(2+) is required as a cofactor.

The catalysed reaction is NAD(+) + (deoxyribonucleotide)n-3'-hydroxyl + 5'-phospho-(deoxyribonucleotide)m = (deoxyribonucleotide)n+m + AMP + beta-nicotinamide D-nucleotide.. In terms of biological role, DNA ligase that catalyzes the formation of phosphodiester linkages between 5'-phosphoryl and 3'-hydroxyl groups in double-stranded DNA using NAD as a coenzyme and as the energy source for the reaction. It is essential for DNA replication and repair of damaged DNA. The protein is DNA ligase of Rickettsia bellii (strain RML369-C).